A 176-amino-acid polypeptide reads, in one-letter code: Ribosome rescue factor SmrB (176 aa).

The 76-residue stretch at Leu-98–Glu-173 folds into the Smr domain.

This sequence belongs to the SmrB family. In terms of assembly, associates with collided ribosomes, but not with correctly translating polysomes.

Acts as a ribosome collision sensor. Detects stalled/collided disomes (pairs of ribosomes where the leading ribosome is stalled and a second ribosome has collided with it) and endonucleolytically cleaves mRNA at the 5' boundary of the stalled ribosome. Stalled/collided disomes form a new interface (primarily via the 30S subunits) that binds SmrB. Cleaved mRNA becomes available for tmRNA ligation, leading to ribosomal subunit dissociation and rescue of stalled ribosomes. This is Ribosome rescue factor SmrB from Buchnera aphidicola subsp. Schizaphis graminum (strain Sg).